The sequence spans 336 residues: tRNA N6-adenosine threonylcarbamoyltransferase (336 aa).

2 residues coordinate Fe cation: His112 and His116. Residues 136–140 (LVSGG), Asp169, Gly182, and Asn276 contribute to the substrate site. Position 304 (Asp304) interacts with Fe cation.

Belongs to the KAE1 / TsaD family. Fe(2+) serves as cofactor.

It is found in the cytoplasm. It carries out the reaction L-threonylcarbamoyladenylate + adenosine(37) in tRNA = N(6)-L-threonylcarbamoyladenosine(37) in tRNA + AMP + H(+). In terms of biological role, required for the formation of a threonylcarbamoyl group on adenosine at position 37 (t(6)A37) in tRNAs that read codons beginning with adenine. Is involved in the transfer of the threonylcarbamoyl moiety of threonylcarbamoyl-AMP (TC-AMP) to the N6 group of A37, together with TsaE and TsaB. TsaD likely plays a direct catalytic role in this reaction. The sequence is that of tRNA N6-adenosine threonylcarbamoyltransferase from Francisella tularensis subsp. novicida (strain U112).